Here is a 444-residue protein sequence, read N- to C-terminus: Deoxyguanosinetriphosphate triphosphohydrolase-like protein (444 aa).

One can recognise an HD domain in the interval 66–259 (RLTHSLEAAQ…MELADDIAYG (194 aa)).

It belongs to the dGTPase family. Type 2 subfamily.

The chain is Deoxyguanosinetriphosphate triphosphohydrolase-like protein from Vibrio campbellii (strain ATCC BAA-1116).